A 256-amino-acid polypeptide reads, in one-letter code: MQNRSSSPDSSSAGNTHFGFQSVPEGDKANKVAEVFHSVAARYDVMNDLMSAGLHRVWKAFTIGRANVRPGMKVLDIAGGTGDLARAFAKRAGPSGEVWLTDINDSMLRVGRDRLTDGGLILPLAVCDAEKLPFPDQYFDRVSVAFGLRNMTHKDRALAEMRRVLKPGGKLLVLEFSRVAKPLAPAYDWYSFNVLPWLGKKVANDEASYRYLAESIRMHPDQDTLADMMRAVGLDRVQYFNLTAGVAALHEGVRLG.

The segment covering 1–19 (MQNRSSSPDSSSAGNTHFG) has biased composition (polar residues). The tract at residues 1–24 (MQNRSSSPDSSSAGNTHFGFQSVP) is disordered. Residues Thr-81, Asp-102, and 128 to 129 (DA) each bind S-adenosyl-L-methionine.

It belongs to the class I-like SAM-binding methyltransferase superfamily. MenG/UbiE family.

The catalysed reaction is a 2-demethylmenaquinol + S-adenosyl-L-methionine = a menaquinol + S-adenosyl-L-homocysteine + H(+). The enzyme catalyses a 2-methoxy-6-(all-trans-polyprenyl)benzene-1,4-diol + S-adenosyl-L-methionine = a 5-methoxy-2-methyl-3-(all-trans-polyprenyl)benzene-1,4-diol + S-adenosyl-L-homocysteine + H(+). It functions in the pathway quinol/quinone metabolism; menaquinone biosynthesis; menaquinol from 1,4-dihydroxy-2-naphthoate: step 2/2. It participates in cofactor biosynthesis; ubiquinone biosynthesis. Its function is as follows. Methyltransferase required for the conversion of demethylmenaquinol (DMKH2) to menaquinol (MKH2) and the conversion of 2-polyprenyl-6-methoxy-1,4-benzoquinol (DDMQH2) to 2-polyprenyl-3-methyl-6-methoxy-1,4-benzoquinol (DMQH2). This chain is Ubiquinone/menaquinone biosynthesis C-methyltransferase UbiE, found in Bordetella avium (strain 197N).